The following is a 630-amino-acid chain: Arginine--tRNA ligase (630 aa).

Residues 120-130 carry the 'HIGH' region motif; the sequence is ANPIHPLHIGH.

This sequence belongs to the class-I aminoacyl-tRNA synthetase family.

The protein resides in the cytoplasm. It carries out the reaction tRNA(Arg) + L-arginine + ATP = L-arginyl-tRNA(Arg) + AMP + diphosphate. The polypeptide is Arginine--tRNA ligase (Pyrobaculum arsenaticum (strain DSM 13514 / JCM 11321 / PZ6)).